Here is a 157-residue protein sequence, read N- to C-terminus: Ribosome maturation factor RimP (157 aa).

Belongs to the RimP family.

It is found in the cytoplasm. Its function is as follows. Required for maturation of 30S ribosomal subunits. The chain is Ribosome maturation factor RimP from Thermobifida fusca (strain YX).